Consider the following 210-residue polypeptide: Large ribosomal subunit protein uL3 (210 aa).

The segment at Ala-139–Pro-165 is disordered.

It belongs to the universal ribosomal protein uL3 family. As to quaternary structure, part of the 50S ribosomal subunit. Forms a cluster with proteins L14 and L19.

One of the primary rRNA binding proteins, it binds directly near the 3'-end of the 23S rRNA, where it nucleates assembly of the 50S subunit. This is Large ribosomal subunit protein uL3 from Maridesulfovibrio salexigens (strain ATCC 14822 / DSM 2638 / NCIMB 8403 / VKM B-1763) (Desulfovibrio salexigens).